The chain runs to 464 residues: Siroheme synthase (464 aa).

The segment at Met-1 to Leu-203 is precorrin-2 dehydrogenase /sirohydrochlorin ferrochelatase. Residues Glu-22–Ile-23 and Pro-43–Glu-44 each bind NAD(+). Phosphoserine is present on Ser-128. Residues Gly-216–Val-464 are uroporphyrinogen-III C-methyltransferase. S-adenosyl-L-methionine is bound at residue Pro-225. The active-site Proton acceptor is Asp-248. Lys-270 acts as the Proton donor in catalysis. S-adenosyl-L-methionine contacts are provided by residues Gly-301–Asp-303, Ile-306, Thr-331–Ala-332, Met-383, and Gly-412.

This sequence in the N-terminal section; belongs to the precorrin-2 dehydrogenase / sirohydrochlorin ferrochelatase family. In the C-terminal section; belongs to the precorrin methyltransferase family.

The enzyme catalyses uroporphyrinogen III + 2 S-adenosyl-L-methionine = precorrin-2 + 2 S-adenosyl-L-homocysteine + H(+). The catalysed reaction is precorrin-2 + NAD(+) = sirohydrochlorin + NADH + 2 H(+). It carries out the reaction siroheme + 2 H(+) = sirohydrochlorin + Fe(2+). Its pathway is cofactor biosynthesis; adenosylcobalamin biosynthesis; precorrin-2 from uroporphyrinogen III: step 1/1. The protein operates within cofactor biosynthesis; adenosylcobalamin biosynthesis; sirohydrochlorin from precorrin-2: step 1/1. It participates in porphyrin-containing compound metabolism; siroheme biosynthesis; precorrin-2 from uroporphyrinogen III: step 1/1. It functions in the pathway porphyrin-containing compound metabolism; siroheme biosynthesis; siroheme from sirohydrochlorin: step 1/1. Its pathway is porphyrin-containing compound metabolism; siroheme biosynthesis; sirohydrochlorin from precorrin-2: step 1/1. Multifunctional enzyme that catalyzes the SAM-dependent methylations of uroporphyrinogen III at position C-2 and C-7 to form precorrin-2 via precorrin-1. Then it catalyzes the NAD-dependent ring dehydrogenation of precorrin-2 to yield sirohydrochlorin. Finally, it catalyzes the ferrochelation of sirohydrochlorin to yield siroheme. This chain is Siroheme synthase, found in Pseudomonas fluorescens (strain ATCC BAA-477 / NRRL B-23932 / Pf-5).